A 219-amino-acid chain; its full sequence is Ras-related protein Rab-3B (219 aa).

N-acetylalanine is present on Ala2. Residues Ser31, Ser32, Val33, Gly34, Lys35, Thr36, Ser37, Pro49, and Ser53 each contribute to the GTP site. Ser32 provides a ligand contact to GDP. The GDP site is built by Gly34, Lys35, Thr36, and Ser37. Thr36 contributes to the Mg(2+) binding site. The Switch 1 signature appears at 45–58; that stretch reads DTFTPAFVSTVGID. Positions 54 and 77 each coordinate Mg(2+). The Switch 2 motif lies at 78 to 96; it reads TAGQERYRTITTAYYRGAM. GTP is bound at residue Gly80. Residue Thr86 is modified to Phosphothreonine; by LRRK2. Residues Asn135, Lys136, and Asp138 each coordinate GTP. GDP is bound by residues Asn135, Lys136, Asp138, Met139, Ala166, and Lys167. GTP-binding residues include Ala166 and Lys167. Residues Ser188 and Ser190 each carry the phosphoserine modification. 2 S-geranylgeranyl cysteine lipidation sites follow: Cys217 and Cys219. Position 219 is a cysteine methyl ester (Cys219).

It belongs to the small GTPase superfamily. Rab family. As to quaternary structure, interacts with RIMS1, RIMS2, RPH3A and RPH3AL. The GTP-bound form interacts with GAS8/DRC4 (via coiled-coil domains). The GTP-bound form interacts with REP15. Interacts with GDI2, CHM and CHML; phosphorylation at Thr-86 disrupts these interactions. Interacts with MADD (via uDENN domain); the GTP-bound form is preferred for interaction. Requires Mg(2+) as cofactor. In terms of processing, phosphorylation of Thr-86 in the switch II region by LRRK2 prevents the association of RAB regulatory proteins, including CHM, CHML and RAB GDP dissociation inhibitor GDI2.

It is found in the cell membrane. The protein resides in the golgi apparatus. It catalyses the reaction GTP + H2O = GDP + phosphate + H(+). Its activity is regulated as follows. Regulated by guanine nucleotide exchange factors (GEFs) which promote the exchange of bound GDP for free GTP. Regulated by GTPase activating proteins (GAPs) which increase the GTP hydrolysis activity. Inhibited by GDP dissociation inhibitors (GDIs) which prevent Rab-GDP dissociation. In terms of biological role, the small GTPases Rab are key regulators of intracellular membrane trafficking, from the formation of transport vesicles to their fusion with membranes. Rabs cycle between an inactive GDP-bound form and an active GTP-bound form that is able to recruit to membranes different sets of downstream effectors directly responsible for vesicle formation, movement, tethering and fusion. This chain is Ras-related protein Rab-3B, found in Homo sapiens (Human).